Consider the following 392-residue polypeptide: DNA primase small subunit PriS (392 aa).

Catalysis depends on residues aspartate 98, aspartate 100, and aspartate 295.

Belongs to the eukaryotic-type primase small subunit family. Heterodimer of a small subunit (PriS) and a large subunit (PriL). Mg(2+) serves as cofactor. Requires Mn(2+) as cofactor.

In terms of biological role, catalytic subunit of DNA primase, an RNA polymerase that catalyzes the synthesis of short RNA molecules used as primers for DNA polymerase during DNA replication. The small subunit contains the primase catalytic core and has DNA synthesis activity on its own. Binding to the large subunit stabilizes and modulates the activity, increasing the rate of DNA synthesis while decreasing the length of the DNA fragments, and conferring RNA synthesis capability. The DNA polymerase activity may enable DNA primase to also catalyze primer extension after primer synthesis. May also play a role in DNA repair. The polypeptide is DNA primase small subunit PriS (Haloarcula marismortui (strain ATCC 43049 / DSM 3752 / JCM 8966 / VKM B-1809) (Halobacterium marismortui)).